We begin with the raw amino-acid sequence, 455 residues long: SVGFKAGVKDYKLTYYTPDYETKDTDILAAFRVTPQPGVPPEEAGAEVAAESSTGTWTTVWTDGLTSLDRYKGRCYHIEPVAGEENQYIAYVAYPLDLFEEGSVTNMFTSIVGNVFGFKALRALRLEDLRIPTAYTKTFQGPPHGIQVERDKLNKYGRPLLGCTIKPKLGLSAKNYGRAVYECLRGGLDFTKDDENVNSQPFMRWRDRFLFCAEAIYKAQAETGEIKGHYLNATAGTWEEMIKRAVFARELGVPIVMHDYLTGGFTANTSLAHYCRDNGLLLHIHRAMHAVIDRQKNHGMHFRVLAKALRLSGGDHIHAGTVVGKLEGEREITLGFVDLLRDDFIEKDRSRGIYFTQDWVSLPGVLPVASGGIHVWHMPALTEIFGDDSVLQFGGGTLGHPWGNAPGAVANRVALEACVQARNEGRDLAREGNEIIREASKWSPELAAACEVWKE.

Residue lysine 5 is modified to N6,N6,N6-trimethyllysine. Substrate contacts are provided by asparagine 114 and threonine 164. Lysine 166 (proton acceptor) is an active-site residue. Lysine 168 lines the substrate pocket. The Mg(2+) site is built by lysine 192, aspartate 194, and glutamate 195. At lysine 192 the chain carries N6-carboxylysine. Histidine 285 serves as the catalytic Proton acceptor. Substrate contacts are provided by arginine 286, histidine 318, and serine 370.

The protein belongs to the RuBisCO large chain family. Type I subfamily. As to quaternary structure, heterohexadecamer of 8 large chains and 8 small chains. The cofactor is Mg(2+).

The protein resides in the plastid. Its subcellular location is the chloroplast. The enzyme catalyses 2 (2R)-3-phosphoglycerate + 2 H(+) = D-ribulose 1,5-bisphosphate + CO2 + H2O. It carries out the reaction D-ribulose 1,5-bisphosphate + O2 = 2-phosphoglycolate + (2R)-3-phosphoglycerate + 2 H(+). In terms of biological role, ruBisCO catalyzes two reactions: the carboxylation of D-ribulose 1,5-bisphosphate, the primary event in carbon dioxide fixation, as well as the oxidative fragmentation of the pentose substrate in the photorespiration process. Both reactions occur simultaneously and in competition at the same active site. The protein is Ribulose bisphosphate carboxylase large chain of Tamarindus indica (Tamarind).